The sequence spans 863 residues: MSGEVAQDQPPIRSPRSTRRSQEIVNSAITVQSSAKLDTDKSGAQADKVSSKKSRTTSPELLEDQVVSNESKTSKKKETKASQLFSKRKEIFSTRDLRFLKLRIASPTRIRSWGTHKLPNGKQVGRITKAETINYRTYKPEMDGLFCERAFGPVKDWECHCGRTKGQERNKDGIPIPRVCTHCGVELRDSKIRRHRMGYIELVYPVVHIWYLKSIPSYLGVLLDKPRRELEAITYCTNYASSQDSMAFSASLLFPTTGSFRQSKDSMKWEYLNWFHIETYLGLKEATNSALVHYGKRIQDSPIEVGLPLSEDPRQFSIGAQAIACQLRALNLRSVSRLLSRDLYIIDARETRFGALEEEEMKRRSKLIRRLQLIHYFMQTKAQPEWMVIKALPVLPPDLRPIVQLEGGRFATTDLNDLYRRVLNRNNRFMKLHKMVAPETLIRSEKRLLQEAVDGLFDNGKRGKPVLNSSNRPLKSLADALKGKQGRFRQNLLGKRVDYSGRSVIVVGPKLRLHQCGLPKEMALELFQPLVIRLLLKRKVAPNIRYAKKLMHHAVARGPENPTIIDAVVWDTLAAVVEGYPILLNRAPTLHRLGIQAFEPVLINGRAIQLHPLVCTGFNADFDGDQMGVHIPLSAEARAEAKLLMLASHNLLSPATGQPIVVPSQDMVLGWYYLTTENPWIESTEGLYFSGLSDVEHAYHQGQIHLHSIIWVRWGGESEGSLGDEFEDNPLEIRIDANGHSWHIYSQYQLRYDDEGDLISQFIRTTTGRVVFNQLVHRHIEWSLHDQVMEEIETEFPESVLPPDVMRCLVRLYSAHAIGERPAMLGLASPGTPSPGRACAYPPRDDYADPNQIKEYLNRIGHW.

The interval 1–83 is disordered; the sequence is MSGEVAQDQP…SKKKETKASQ (83 aa). Residues 23–36 show a composition bias toward polar residues; that stretch reads EIVNSAITVQSSAK. Zn(2+) is bound by residues cysteine 159, cysteine 161, cysteine 180, and cysteine 183. Residues aspartate 621, aspartate 623, and aspartate 625 each coordinate Mg(2+).

The protein belongs to the RNA polymerase beta' chain family. RpoC1 subfamily. In terms of assembly, in plastids the minimal PEP RNA polymerase catalytic core is composed of four subunits: alpha, beta, beta', and beta''. When a (nuclear-encoded) sigma factor is associated with the core the holoenzyme is formed, which can initiate transcription. It depends on Mg(2+) as a cofactor. The cofactor is Zn(2+).

The protein localises to the plastid. Its subcellular location is the chloroplast. The catalysed reaction is RNA(n) + a ribonucleoside 5'-triphosphate = RNA(n+1) + diphosphate. Its function is as follows. DNA-dependent RNA polymerase catalyzes the transcription of DNA into RNA using the four ribonucleoside triphosphates as substrates. In Nephroselmis olivacea (Green alga), this protein is DNA-directed RNA polymerase subunit beta'.